We begin with the raw amino-acid sequence, 220 residues long: Phosphatidylserine decarboxylase proenzyme (220 aa).

The Schiff-base intermediate with substrate; via pyruvic acid role is filled by S188. S188 carries the post-translational modification Pyruvic acid (Ser); by autocatalysis.

Belongs to the phosphatidylserine decarboxylase family. PSD-A subfamily. Heterodimer of a large membrane-associated beta subunit and a small pyruvoyl-containing alpha subunit. It depends on pyruvate as a cofactor. Post-translationally, is synthesized initially as an inactive proenzyme. Formation of the active enzyme involves a self-maturation process in which the active site pyruvoyl group is generated from an internal serine residue via an autocatalytic post-translational modification. Two non-identical subunits are generated from the proenzyme in this reaction, and the pyruvate is formed at the N-terminus of the alpha chain, which is derived from the carboxyl end of the proenzyme. The post-translation cleavage follows an unusual pathway, termed non-hydrolytic serinolysis, in which the side chain hydroxyl group of the serine supplies its oxygen atom to form the C-terminus of the beta chain, while the remainder of the serine residue undergoes an oxidative deamination to produce ammonia and the pyruvoyl prosthetic group on the alpha chain.

It is found in the cell membrane. It catalyses the reaction a 1,2-diacyl-sn-glycero-3-phospho-L-serine + H(+) = a 1,2-diacyl-sn-glycero-3-phosphoethanolamine + CO2. It participates in phospholipid metabolism; phosphatidylethanolamine biosynthesis; phosphatidylethanolamine from CDP-diacylglycerol: step 2/2. In terms of biological role, catalyzes the formation of phosphatidylethanolamine (PtdEtn) from phosphatidylserine (PtdSer). This Parabacteroides distasonis (strain ATCC 8503 / DSM 20701 / CIP 104284 / JCM 5825 / NCTC 11152) protein is Phosphatidylserine decarboxylase proenzyme.